The primary structure comprises 295 residues: Inorganic pyrophosphatase 1 (295 aa).

Catalysis depends on D19, which acts as the Nucleophile. Positions 19 and 21 each coordinate Mg(2+). Catalysis depends on D21, which acts as the Proton donor. Residues D30 and D105 each contribute to the substrate site. D190 is a Mg(2+) binding site.

It belongs to the HAD-like hydrolase superfamily. In terms of assembly, tetramer. Mg(2+) is required as a cofactor. Requires Fe(2+) as cofactor. The cofactor is Ni(2+). It depends on Co(2+) as a cofactor. Mn(2+) serves as cofactor.

It carries out the reaction diphosphate + H2O = 2 phosphate + H(+). Functionally, catalyzes the specific cleavage of pyrophosphate. This chain is Inorganic pyrophosphatase 1 (PS2), found in Arabidopsis thaliana (Mouse-ear cress).